Consider the following 885-residue polypeptide: Leucine--tRNA ligase (885 aa).

Positions 43–53 match the 'HIGH' region motif; that stretch reads PYTSGQLHMGH. A 'KMSKS' region motif is present at residues 571–575; the sequence is KMSKS. Lys-574 is a binding site for ATP. Positions 866 to 885 are disordered; it reads SVANKAEPGRPAIHVDEADD.

It belongs to the class-I aminoacyl-tRNA synthetase family.

It localises to the cytoplasm. It catalyses the reaction tRNA(Leu) + L-leucine + ATP = L-leucyl-tRNA(Leu) + AMP + diphosphate. The polypeptide is Leucine--tRNA ligase (Halobacterium salinarum (strain ATCC 700922 / JCM 11081 / NRC-1) (Halobacterium halobium)).